We begin with the raw amino-acid sequence, 307 residues long: Sporulation sigma-E factor-processing peptidase (307 aa).

5 consecutive transmembrane segments (helical) span residues 7-27 (LIWM…AVVL), 36-56 (LLLG…PFSH), 57-77 (LMVH…MTFG), 89-109 (LTFY…HFLF), and 127-147 (FGDP…SYFS). Asp-183 is a catalytic residue.

Belongs to the peptidase U4 family. Self-associates. Interacts with SigE. Interacts with SpoIIR.

The protein resides in the cell membrane. Functionally, probable aspartic protease that is responsible for the proteolytic cleavage of the RNA polymerase sigma E factor (SigE/spoIIGB) to yield the active peptide in the mother cell during sporulation. Responds to a signal from the forespore that is triggered by the extracellular signal protein SpoIIR. The protein is Sporulation sigma-E factor-processing peptidase of Priestia megaterium (strain ATCC 12872 / QMB1551) (Bacillus megaterium).